We begin with the raw amino-acid sequence, 308 residues long: F420-non-reducing hydrogenase subunit G (308 aa).

The protein belongs to the [NiFe]/[NiFeSe] hydrogenase small subunit family. As to quaternary structure, the F420-non-reducing hydrogenase is composed of three subunits; MvhA, MvhD and MvhG. It forms a complex with the heterodisulfide reductase (hdr).

Functionally, part of a complex that provides reducing equivalents for heterodisulfide reductase. The chain is F420-non-reducing hydrogenase subunit G (mvhG) from Methanothermobacter marburgensis (strain ATCC BAA-927 / DSM 2133 / JCM 14651 / NBRC 100331 / OCM 82 / Marburg) (Methanobacterium thermoautotrophicum).